The chain runs to 617 residues: Na(+)/H(+) antiporter NhaA 1 (617 aa).

A na(+)/H(+) antiporter NhaA region spans residues 1 to 433 (MTVTEQTTAR…GWAIFRITDW (433 aa)). Helical transmembrane passes span 33–53 (AAAL…SPWA), 75–95 (MTVK…IVGL), 113–133 (AVPV…FLAF), 141–161 (HAWG…LAII), 171–191 (LFLL…IAVF), 194–214 (DAIQ…LALV), 234–254 (VALY…ALLI), 304–324 (VGPA…AGVL), 340–360 (WGVV…ATWL), 378–398 (IAGG…IVDI), and 411–431 (IGVL…FRIT). Residues 434-617 (LSPPEPVGLK…LIRALEAGRR (184 aa)) enclose the Thioredoxin domain.

This sequence in the N-terminal section; belongs to the NhaA Na(+)/H(+) (TC 2.A.33) antiporter family.

It is found in the cell membrane. The enzyme catalyses Na(+)(in) + 2 H(+)(out) = Na(+)(out) + 2 H(+)(in). Functionally, na(+)/H(+) antiporter that extrudes sodium in exchange for external protons. The chain is Na(+)/H(+) antiporter NhaA 1 from Mycolicibacterium vanbaalenii (strain DSM 7251 / JCM 13017 / BCRC 16820 / KCTC 9966 / NRRL B-24157 / PYR-1) (Mycobacterium vanbaalenii).